The sequence spans 456 residues: Exodeoxyribonuclease 7 large subunit (456 aa).

This sequence belongs to the XseA family. Heterooligomer composed of large and small subunits.

Its subcellular location is the cytoplasm. It carries out the reaction Exonucleolytic cleavage in either 5'- to 3'- or 3'- to 5'-direction to yield nucleoside 5'-phosphates.. Functionally, bidirectionally degrades single-stranded DNA into large acid-insoluble oligonucleotides, which are then degraded further into small acid-soluble oligonucleotides. This Escherichia coli O157:H7 protein is Exodeoxyribonuclease 7 large subunit.